The sequence spans 346 residues: Histidinol-phosphate aminotransferase (346 aa).

Lys209 is modified (N6-(pyridoxal phosphate)lysine).

Belongs to the class-II pyridoxal-phosphate-dependent aminotransferase family. Histidinol-phosphate aminotransferase subfamily. In terms of assembly, homodimer. The cofactor is pyridoxal 5'-phosphate.

It carries out the reaction L-histidinol phosphate + 2-oxoglutarate = 3-(imidazol-4-yl)-2-oxopropyl phosphate + L-glutamate. It functions in the pathway amino-acid biosynthesis; L-histidine biosynthesis; L-histidine from 5-phospho-alpha-D-ribose 1-diphosphate: step 7/9. This is Histidinol-phosphate aminotransferase from Vibrio vulnificus (strain CMCP6).